The chain runs to 249 residues: Glycoprotein 2a (249 aa).

Residues 1–35 (MQWGHCGVKSASCSWTPSLSSLLVWLILPFSLPYC) form the signal peptide. Residues 36–207 (LGSPSQDGYW…LTDFRQWLIS (172 aa)) lie on the Virion surface side of the membrane. Residues asparagine 173 and asparagine 179 are each glycosylated (N-linked (GlcNAc...) asparagine; by host). A helical membrane pass occupies residues 208-228 (VHASIFSSVASSVTLFIVLWL). The Intravirion portion of the chain corresponds to 229–249 (RIPALRYVFGFHWPTATHHSS).

Heterotrimer of GP2a, GP3, and GP4. The GP2a-GP3-GP4 complex associates with the E protein. Interacts with host CD163; this interaction plays a role in virus entry into host cell.

The protein resides in the virion membrane. The protein localises to the host endoplasmic reticulum membrane. It is found in the host Golgi apparatus membrane. Its subcellular location is the secreted. Functionally, minor envelope protein. Along with GP4, serves as the viral attachment protein responsible for mediating interactions with CD163 thereby playing a role in virus entry into susceptible host cells. This Porcine reproductive and respiratory syndrome virus (strain Lelystad) (PRRSV) protein is Glycoprotein 2a (GP2a).